Consider the following 338-residue polypeptide: Ketol-acid reductoisomerase (NADP(+)) (338 aa).

The region spanning 1–181 (MKVYYDKDAD…GGTRGGVIET (181 aa)) is the KARI N-terminal Rossmann domain. NADP(+) contacts are provided by residues 24–27 (YGSQ), Arg47, and Ser52. His107 is a catalytic residue. Gly133 contributes to the NADP(+) binding site. In terms of domain architecture, KARI C-terminal knotted spans 182 to 327 (TFKEETETDL…SRLRDMMPWI (146 aa)). Mg(2+)-binding residues include Asp190, Glu194, Glu226, and Glu230. Position 251 (Ser251) interacts with substrate.

Belongs to the ketol-acid reductoisomerase family. Mg(2+) serves as cofactor.

The catalysed reaction is (2R)-2,3-dihydroxy-3-methylbutanoate + NADP(+) = (2S)-2-acetolactate + NADPH + H(+). It catalyses the reaction (2R,3R)-2,3-dihydroxy-3-methylpentanoate + NADP(+) = (S)-2-ethyl-2-hydroxy-3-oxobutanoate + NADPH + H(+). The protein operates within amino-acid biosynthesis; L-isoleucine biosynthesis; L-isoleucine from 2-oxobutanoate: step 2/4. It participates in amino-acid biosynthesis; L-valine biosynthesis; L-valine from pyruvate: step 2/4. Functionally, involved in the biosynthesis of branched-chain amino acids (BCAA). Catalyzes an alkyl-migration followed by a ketol-acid reduction of (S)-2-acetolactate (S2AL) to yield (R)-2,3-dihydroxy-isovalerate. In the isomerase reaction, S2AL is rearranged via a Mg-dependent methyl migration to produce 3-hydroxy-3-methyl-2-ketobutyrate (HMKB). In the reductase reaction, this 2-ketoacid undergoes a metal-dependent reduction by NADPH to yield (R)-2,3-dihydroxy-isovalerate. In Nitrosomonas eutropha (strain DSM 101675 / C91 / Nm57), this protein is Ketol-acid reductoisomerase (NADP(+)).